We begin with the raw amino-acid sequence, 101 residues long: MEPVDPNLEPWKHPGSQPTTACSNCYCKVCCWHCQLCFLKKGLGISYGKKKRKPRRGPPQGSKDHQTLIPKQPLPQSQRVSAGQEESKKKVESKAKTDRFA.

The segment at 1 to 20 is disordered; sequence MEPVDPNLEPWKHPGSQPTT. Residues 1 to 24 are interaction with human CREBBP; the sequence is MEPVDPNLEPWKHPGSQPTTACSN. Positions 1–48 are transactivation; that stretch reads MEPVDPNLEPWKHPGSQPTTACSNCYCKVCCWHCQLCFLKKGLGISYG. Cys-22, Cys-25, and Cys-27 together coordinate Zn(2+). The cysteine-rich stretch occupies residues 22-37; the sequence is CSNCYCKVCCWHCQLC. Lys-28 carries the post-translational modification N6-acetyllysine; by host PCAF. Zn(2+)-binding residues include Cys-30, His-33, Cys-34, and Cys-37. The interval 38 to 48 is core; that stretch reads FLKKGLGISYG. The segment at 48–101 is disordered; that stretch reads GKKKRKPRRGPPQGSKDHQTLIPKQPLPQSQRVSAGQEESKKKVESKAKTDRFA. The short motif at 49 to 57 is the Nuclear localization signal, RNA-binding (TAR), and protein transduction element; sequence KKKRKPRRG. The segment at 49–86 is interaction with the host capping enzyme RNGTT; sequence KKKRKPRRGPPQGSKDHQTLIPKQPLPQSQRVSAGQEE. N6-acetyllysine; by host EP300 and GCN5L2 is present on residues Lys-50 and Lys-51. Arg-52 is modified (asymmetric dimethylarginine; by host PRMT6). Lys-71 is covalently cross-linked (Glycyl lysine isopeptide (Lys-Gly) (interchain with G-Cter in ubiquitin)). Positions 85 to 101 are enriched in basic and acidic residues; the sequence is EESKKKVESKAKTDRFA.

Belongs to the lentiviruses Tat family. In terms of assembly, interacts with host CCNT1. Associates with the P-TEFb complex composed at least of Tat, P-TEFb (CDK9 and CCNT1), TAR RNA, RNA Pol II. Recruits the HATs CREBBP, TAF1/TFIID, EP300, PCAF and GCN5L2. Interacts with host KAT5/Tip60; this interaction targets the latter to degradation. Interacts with the host deacetylase SIRT1. Interacts with host capping enzyme RNGTT; this interaction stimulates RNGTT. Binds to host KDR, and to the host integrins ITGAV/ITGB3 and ITGA5/ITGB1. Interacts with host KPNB1/importin beta-1 without previous binding to KPNA1/importin alpha-1. Interacts with EIF2AK2. Interacts with host nucleosome assembly protein NAP1L1; this interaction may be required for the transport of Tat within the nucleus, since the two proteins interact at the nuclear rim. Interacts with host C1QBP/SF2P32; this interaction involves lysine-acetylated Tat. Interacts with the host chemokine receptors CCR2, CCR3 and CXCR4. Interacts with host DPP4/CD26; this interaction may trigger an anti-proliferative effect. Interacts with host LDLR. Interacts with the host extracellular matrix metalloproteinase MMP1. Interacts with host PRMT6; this interaction mediates Tat's methylation. Interacts with, and is ubiquitinated by MDM2/Hdm2. Interacts with host PSMC3 and HTATIP2. Interacts with STAB1; this interaction may overcome SATB1-mediated repression of IL2 and IL2RA (interleukin) in T cells by binding to the same domain than HDAC1. Interacts (when acetylated) with human CDK13, thereby increasing HIV-1 mRNA splicing and promoting the production of the doubly spliced HIV-1 protein Nef. Interacts with host TBP; this interaction modulates the activity of transcriptional pre-initiation complex. Interacts with host RELA. Interacts with host PLSCR1; this interaction negatively regulates Tat transactivation activity by altering its subcellular distribution. Asymmetrical arginine methylation by host PRMT6 seems to diminish the transactivation capacity of Tat and affects the interaction with host CCNT1. Post-translationally, acetylation by EP300, CREBBP, GCN5L2/GCN5 and PCAF regulates the transactivation activity of Tat. EP300-mediated acetylation of Lys-50 promotes dissociation of Tat from the TAR RNA through the competitive binding to PCAF's bromodomain. In addition, the non-acetylated Tat's N-terminus can also interact with PCAF. PCAF-mediated acetylation of Lys-28 enhances Tat's binding to CCNT1. Lys-50 is deacetylated by SIRT1. In terms of processing, polyubiquitination by host MDM2 does not target Tat to degradation, but activates its transactivation function and fosters interaction with CCNT1 and TAR RNA. Phosphorylated by EIF2AK2 on serine and threonine residues adjacent to the basic region important for TAR RNA binding and function. Phosphorylation of Tat by EIF2AK2 is dependent on the prior activation of EIF2AK2 by dsRNA.

The protein resides in the host nucleus. Its subcellular location is the host nucleolus. It localises to the host cytoplasm. It is found in the secreted. Its function is as follows. Transcriptional activator that increases RNA Pol II processivity, thereby increasing the level of full-length viral transcripts. Recognizes a hairpin structure at the 5'-LTR of the nascent viral mRNAs referred to as the transactivation responsive RNA element (TAR) and recruits the cyclin T1-CDK9 complex (P-TEFb complex) that will in turn hyperphosphorylate the RNA polymerase II to allow efficient elongation. The CDK9 component of P-TEFb and other Tat-activated kinases hyperphosphorylate the C-terminus of RNA Pol II that becomes stabilized and much more processive. Other factors such as HTATSF1/Tat-SF1, SUPT5H/SPT5, and HTATIP2 are also important for Tat's function. Besides its effect on RNA Pol II processivity, Tat induces chromatin remodeling of proviral genes by recruiting the histone acetyltransferases (HATs) CREBBP, EP300 and PCAF to the chromatin. This also contributes to the increase in proviral transcription rate, especially when the provirus integrates in transcriptionally silent region of the host genome. To ensure maximal activation of the LTR, Tat mediates nuclear translocation of NF-kappa-B by interacting with host RELA. Through its interaction with host TBP, Tat may also modulate transcription initiation. Tat can reactivate a latently infected cell by penetrating in it and transactivating its LTR promoter. In the cytoplasm, Tat is thought to act as a translational activator of HIV-1 mRNAs. In terms of biological role, extracellular circulating Tat can be endocytosed by surrounding uninfected cells via the binding to several surface receptors such as CD26, CXCR4, heparan sulfate proteoglycans (HSPG) or LDLR. Neurons are rarely infected, but they internalize Tat via their LDLR. Through its interaction with nuclear HATs, Tat is potentially able to control the acetylation-dependent cellular gene expression. Modulates the expression of many cellular genes involved in cell survival, proliferation or in coding for cytokines or cytokine receptors. Tat plays a role in T-cell and neurons apoptosis. Tat induced neurotoxicity and apoptosis probably contribute to neuroAIDS. Circulating Tat also acts as a chemokine-like and/or growth factor-like molecule that binds to specific receptors on the surface of the cells, affecting many cellular pathways. In the vascular system, Tat binds to ITGAV/ITGB3 and ITGA5/ITGB1 integrins dimers at the surface of endothelial cells and competes with bFGF for heparin-binding sites, leading to an excess of soluble bFGF. This is Protein Tat from Human immunodeficiency virus type 1 group M subtype A (isolate U455) (HIV-1).